The chain runs to 761 residues: Pleckstrin homology domain-containing family M member 3 (761 aa).

Position 132 is a phosphoserine (Ser-132). 2 consecutive PH domains span residues 211-308 (NILK…EVVH) and 361-456 (NILK…IAAN). The Phorbol-ester/DAG-type zinc finger occupies 669-722 (SHVYSCSLCSQKGFICEICNNGEILYPFEDISTSRCESCGAVFHSECKEKSVPC).

Interacts with AKT1.

The protein resides in the cytoplasm. It is found in the golgi apparatus. The protein localises to the cell membrane. In terms of biological role, involved in skeletal muscle differentiation. May act as a scaffold protein for AKT1 during muscle differentiation. This Homo sapiens (Human) protein is Pleckstrin homology domain-containing family M member 3.